Here is a 61-residue protein sequence, read N- to C-terminus: MAKKSMIAKNKRPAKYSTQAYTRCEKCGRPHSVYRKFKLCRVCFRELAYKGQIPGVVKASW.

Positions 24, 27, 40, and 43 each coordinate Zn(2+).

It belongs to the universal ribosomal protein uS14 family. Zinc-binding uS14 subfamily. As to quaternary structure, part of the 30S ribosomal subunit. Contacts proteins S3 and S10. Zn(2+) serves as cofactor.

Binds 16S rRNA, required for the assembly of 30S particles and may also be responsible for determining the conformation of the 16S rRNA at the A site. In Streptococcus equi subsp. zooepidemicus (strain H70), this protein is Small ribosomal subunit protein uS14.